The chain runs to 88 residues: RQC P-site tRNA stabilizing factor (88 aa).

Positions 1–67 (MRLDKFLKVS…VEITNVKETV (67 aa)) constitute an S4 RNA-binding domain.

The protein belongs to the RqcP family. As to quaternary structure, associates with stalled 50S ribosomal subunits. Binds to RqcH, 23S rRNA and the P-site tRNA. Does not require RqcH for association with 50S subunits.

Key component of the ribosome quality control system (RQC), a ribosome-associated complex that mediates the extraction of incompletely synthesized nascent chains from stalled ribosomes and their subsequent degradation. RqcH recruits Ala-charged tRNA, and with RqcP directs the elongation of stalled nascent chains on 50S ribosomal subunits, leading to non-templated C-terminal alanine extensions (Ala tail). The Ala tail promotes nascent chain degradation. RqcP is associated with the translocation-like movement of the peptidyl-tRNA from the A-site into the P-site. This Halalkalibacterium halodurans (strain ATCC BAA-125 / DSM 18197 / FERM 7344 / JCM 9153 / C-125) (Bacillus halodurans) protein is RQC P-site tRNA stabilizing factor.